Here is a 311-residue protein sequence, read N- to C-terminus: MSFASDVKKELTGLEVHREHAKAELAALIRMNGSLSLVNQQFVLNVQTENAAIARRMYSLLKDHYHAQAELLVRKKMKLKKNNVYIVRLKQDTQKILADLDIMDGVVFNGNVSNEIMGNAQKMRSYLRGAFMASGSVNNPETSRYHLEIFSIYEEHNNDICKMLNYYDLNARTLGRRNGYICYLKGAEKIADFLTLIGATNSMLKFEDVRIVRDMRNSVNRLVNCETANLNKTIDAASKQIENIQFIESTVGLTSLPEKLQEIAELRLEYPEVSLKELGEMIPSGAISKSGINHRIRKINEFAEKLREKSA.

The segment at residues 274–308 (SLKELGEMIPSGAISKSGINHRIRKINEFAEKLRE) is a DNA-binding region (H-T-H motif).

Belongs to the WhiA family.

Its function is as follows. Involved in cell division and chromosome segregation. This Enterococcus faecalis (strain ATCC 700802 / V583) protein is Probable cell division protein WhiA.